Reading from the N-terminus, the 312-residue chain is MEKFIDSFFNKFDSGVHLLTKLLDAFFHVQKSLMDILSDIIFKTIGLFVEFTKRIYKFFRWSTIPINFIIVRVWWLWYIFRFEDYDPLINPGVHYIRALPGGGKSLLGYQLANTIMDETGYSSYISAKLEKPKITPDGKYYYVNHQVIDIKSYYKNGKKVKRFNTEKFKSLILDEFHVLNNQRLNMQKENKDFFIPFINDLVLLRHQGFSNNIYLLSQIPNNDVQIMSILAGYHELSLKKGVSYWQFIKTGKLRIVPLRIKIKHYSIEWNDSGVSKKRLIRTTNRKVDLERLEYFDTLAERDRDKDLPLDFK.

This is an uncharacterized protein from Mycoplasma (Bacteriophage L2).